The primary structure comprises 310 residues: MSKPRKPKGRPISGWLILDKPVDFGSTEAVSKIKWLYKAEKAGHAGTLDPLASGMLPIALGDATKTVPYVMDGRKIYEFTVSWGEERATDDLEGDVTKSSDKRPSEQQIRDILPGYIGTISQVPPQFSAIKIAGERAYDLAREGETIEIPSREVDIFRLTLLACPDADSAHFEVECGKGTYVRALARDFGRELGCYGHVSGLRRTFVAPFAEGAMVPLADLVALEAIEDMDERLAALDALLIDTCEALSSLPHLVINDDQAHRLKMGNPILVRGRDAPVAESEAYATARGKLIAIGEIGQGEFRPKRVFA.

Residue aspartate 49 is the Nucleophile of the active site.

Belongs to the pseudouridine synthase TruB family. Type 1 subfamily.

It catalyses the reaction uridine(55) in tRNA = pseudouridine(55) in tRNA. Functionally, responsible for synthesis of pseudouridine from uracil-55 in the psi GC loop of transfer RNAs. The protein is tRNA pseudouridine synthase B of Rhizobium johnstonii (strain DSM 114642 / LMG 32736 / 3841) (Rhizobium leguminosarum bv. viciae).